The following is a 216-amino-acid chain: Peptide deformylase 1 (216 aa).

Fe cation-binding residues include cysteine 135 and histidine 177. The active site involves glutamate 178. Histidine 181 serves as a coordination point for Fe cation.

It belongs to the polypeptide deformylase family. It depends on Fe(2+) as a cofactor.

The enzyme catalyses N-terminal N-formyl-L-methionyl-[peptide] + H2O = N-terminal L-methionyl-[peptide] + formate. Removes the formyl group from the N-terminal Met of newly synthesized proteins. Requires at least a dipeptide for an efficient rate of reaction. N-terminal L-methionine is a prerequisite for activity but the enzyme has broad specificity at other positions. The sequence is that of Peptide deformylase 1 from Streptomyces avermitilis (strain ATCC 31267 / DSM 46492 / JCM 5070 / NBRC 14893 / NCIMB 12804 / NRRL 8165 / MA-4680).